The primary structure comprises 377 residues: MAATEDDRLAGSGEGERLDFLRDRHVRFFQRCLQVLPERYSSLETSRLTIAFFALSGLDMLDSLDVVNKDDIIEWIYSLQVLPTEDRSNLDRCGFRGSSYLGIPFNPSKNPGTAHPYDSGHIAMTYTGLSCLIILGDDLSRVDKEACLAGLRALQLEDGSFCAVPEGSENDMRFVYCASCICYMLNNWSGMDMKKAISYIRRSMSYDNGLAQGAGLESHGGSTFCGIASLCLMGKLEEVFSEKELNRIKRWCIMRQQNGYHGRPNKPVDTCYSFWVGATLKLLKIFQYTNFEKNRNYILSTQDRLVGGFAKWPDSHPDALHAYFGICGLSLMEESGICKVHPALNVSTRTSERLRDLHQSWKTKDSKQCSDNVHISS.

4 PFTB repeats span residues 144 to 186, 193 to 234, 245 to 284, and 291 to 333; these read KEAC…YMLN, MKKA…CLMG, LNRIKRWCIMRQQNGYHGRPNKPVDTCYSFWVGATLKLLK, and FEKN…SLME. Geranylgeranyl diphosphate is bound by residues 219–221 and 263–266; these read HGG and RPNK. The Zn(2+) site is built by Asp269 and Cys271. 272–275 provides a ligand contact to geranylgeranyl diphosphate; that stretch reads YSFW. His321 is a Zn(2+) binding site.

It belongs to the protein prenyltransferase subunit beta family. Heterodimer of FNTA and PGGT1B. PGGT1B mediates interaction with substrate peptides. It depends on Zn(2+) as a cofactor. The cofactor is Mg(2+).

It catalyses the reaction geranylgeranyl diphosphate + L-cysteinyl-[protein] = S-geranylgeranyl-L-cysteinyl-[protein] + diphosphate. Its function is as follows. Catalyzes the transfer of a geranylgeranyl moiety from geranylgeranyl diphosphate to a cysteine at the fourth position from the C-terminus of proteins with the C-terminal sequence Cys-aliphatic-aliphatic-X. Known substrates include RAC1, RAC2, RAP1A and RAP1B. This Rattus norvegicus (Rat) protein is Geranylgeranyl transferase type-1 subunit beta (Pggt1b).